The primary structure comprises 347 residues: GMP reductase (347 aa).

Residue 108 to 131 (ADFQKTKDIMAISDEFIFICIDIA) participates in NADP(+) binding. K(+) is bound by residues Gly181 and Gly183. The Thioimidate intermediate role is filled by Cys186. 216–239 (IIGDGGCSCAGDVAKAFGGGADFV) contributes to the NADP(+) binding site.

It belongs to the IMPDH/GMPR family. GuaC type 1 subfamily. In terms of assembly, homotetramer.

The enzyme catalyses IMP + NH4(+) + NADP(+) = GMP + NADPH + 2 H(+). Catalyzes the irreversible NADPH-dependent deamination of GMP to IMP. It functions in the conversion of nucleobase, nucleoside and nucleotide derivatives of G to A nucleotides, and in maintaining the intracellular balance of A and G nucleotides. This Vibrio campbellii (strain ATCC BAA-1116) protein is GMP reductase.